The primary structure comprises 569 residues: Alpha-amylase (569 aa).

The N-terminal stretch at 1 to 28 (MARKTVAAALALVAGAAVAVTGNAPAQA) is a signal peptide. Positions 120, 166, and 175 each coordinate Ca(2+). Asp205 functions as the Nucleophile in the catalytic mechanism. His209 serves as a coordination point for Ca(2+). Glu232 (proton donor) is an active-site residue. The CBM20 domain maps to 468–569 (TTPPATSGAS…QLVLNDTFRS (102 aa)).

This sequence belongs to the glycosyl hydrolase 13 family. In terms of assembly, monomer. It depends on Ca(2+) as a cofactor.

The enzyme catalyses Endohydrolysis of (1-&gt;4)-alpha-D-glucosidic linkages in polysaccharides containing three or more (1-&gt;4)-alpha-linked D-glucose units.. This Streptomyces violaceus (Streptomyces venezuelae) protein is Alpha-amylase (aml).